We begin with the raw amino-acid sequence, 645 residues long: Phosphomethylpyrimidine synthase (645 aa).

Substrate contacts are provided by residues asparagine 235, methionine 264, tyrosine 293, histidine 329, 349–351 (SRG), 390–393 (DGLR), and glutamate 429. Histidine 433 serves as a coordination point for Zn(2+). Tyrosine 456 serves as a coordination point for substrate. Histidine 497 contacts Zn(2+). 3 residues coordinate [4Fe-4S] cluster: cysteine 577, cysteine 580, and cysteine 585.

This sequence belongs to the ThiC family. As to quaternary structure, homodimer. [4Fe-4S] cluster is required as a cofactor.

The catalysed reaction is 5-amino-1-(5-phospho-beta-D-ribosyl)imidazole + S-adenosyl-L-methionine = 4-amino-2-methyl-5-(phosphooxymethyl)pyrimidine + CO + 5'-deoxyadenosine + formate + L-methionine + 3 H(+). The protein operates within cofactor biosynthesis; thiamine diphosphate biosynthesis. In terms of biological role, catalyzes the synthesis of the hydroxymethylpyrimidine phosphate (HMP-P) moiety of thiamine from aminoimidazole ribotide (AIR) in a radical S-adenosyl-L-methionine (SAM)-dependent reaction. The protein is Phosphomethylpyrimidine synthase of Vibrio cholerae serotype O1 (strain ATCC 39541 / Classical Ogawa 395 / O395).